A 316-amino-acid chain; its full sequence is 2,3-dihydroxyphenylpropionate/2,3-dihydroxicinnamic acid 1,2-dioxygenase (316 aa).

Catalysis depends on histidine 115, which acts as the Proton donor. Catalysis depends on histidine 180, which acts as the Proton acceptor.

This sequence belongs to the LigB/MhpB extradiol dioxygenase family. In terms of assembly, homotetramer. Fe(2+) serves as cofactor.

It carries out the reaction 3-(2,3-dihydroxyphenyl)propanoate + O2 = (2Z,4E)-2-hydroxy-6-oxonona-2,4-dienedioate + H(+). The catalysed reaction is (2E)-3-(2,3-dihydroxyphenyl)prop-2-enoate + O2 = (2Z,4E,7E)-2-hydroxy-6-oxonona-2,4,7-trienedioate + H(+). It participates in aromatic compound metabolism; 3-phenylpropanoate degradation. In terms of biological role, catalyzes the non-heme iron(II)-dependent oxidative cleavage of 2,3-dihydroxyphenylpropionic acid and 2,3-dihydroxicinnamic acid into 2-hydroxy-6-ketononadienedioate and 2-hydroxy-6-ketononatrienedioate, respectively. This chain is 2,3-dihydroxyphenylpropionate/2,3-dihydroxicinnamic acid 1,2-dioxygenase, found in Rhodococcus rhodochrous.